The primary structure comprises 311 residues: Homeobox-leucine zipper protein HOX1 (311 aa).

2 disordered regions span residues 29 to 69 (AGGA…SDHR) and 97 to 160 (AETT…KKLR). The segment covering 119-145 (SSPNSTLSSLSGKRGAPSAATAAAAAA) has biased composition (low complexity). Residues 154 to 213 (GSRKKLRLSKDQAAVLEDTFKEHNTLNPKQKAALARQLNLKPRQVEVWFQNRRARTKLKQ) constitute a DNA-binding region (homeobox). Positions 212–256 (KQTEVDCELLKRCCETLTDENRRLHRELQELRALKLATAAAAPHH) are leucine-zipper. Residues 279–311 (SAATTTRNNSGAAPARPVPTRPWPPAAAQRSSA) are disordered. A compositionally biased stretch (polar residues) spans 280–289 (AATTTRNNSG). Positions 294 to 303 (RPVPTRPWPP) are enriched in pro residues.

This sequence belongs to the HD-ZIP homeobox family. Class II subfamily. Homodimer. May form a heterodimer with HOX2, HOX3 or HOX7. As to expression, expressed in root provascular and vascular cylinder, provascular and vascular strands of leaves, provascular and vascular strands of the whole panicle, in mature embryo provascular bundles of scutellum and embryonic axis and provascular and vascular strands of young immature spikelet organs. Expressed in differentiating and differentiated xylem and phloem elements, and in outer and inner bundle sheath cells of all vascular bundles. Expressed in auricles, ligules, culm, guard cells brac hairs and pollen.

It localises to the nucleus. Probable transcription repressor involved leaf development. Binds to the DNA sequence 5'-CAAT[GC]ATTG-3'. May act as a regulatory switch to specify provascular cell fate. This Oryza sativa subsp. indica (Rice) protein is Homeobox-leucine zipper protein HOX1 (HOX1).